A 612-amino-acid polypeptide reads, in one-letter code: Apoptosis-inducing factor 1, mitochondrial (612 aa).

2 short sequence motifs (mitochondrial localization signal) span residues 1–30 and 62–88; these read MFRC…PKQR and KMDN…KTIK. Residues 1–53 constitute a mitochondrion transit peptide; it reads MFRCGGLAGAFKQKLVPLVRSVCVQRPKQRNRLPGNLFQQWRVPLELQMARQM. 2 propeptides (removed in mature form) span residues 54 to 100 and 55 to 101; these read ASSG…RIMG and SSGP…IMGL. An N6-succinyllysine modification is found at Lys108. Ser115 is subject to Phosphoserine. Positions 133–482 are FAD-dependent oxidoreductase; it reads FLLIGGGTAA…KPYWHQSMFW (350 aa). FAD is bound by residues 137–141, 163–164, Arg171, and Lys176; these read GGGTA and ED. Trp195 contributes to the NAD(+) binding site. Val232 provides a ligand contact to FAD. A Glycyl lysine isopeptide (Lys-Gly) (interchain with G-Cter in ubiquitin) cross-link involves residue Lys254. Ser267 is subject to Phosphoserine. Arg284 is an FAD binding site. NAD(+) contacts are provided by residues 307–310, Glu335, and Lys341; that span reads GGFL. Ser370 carries the phosphoserine modification. Lys387 bears the N6-acetyllysine mark. Gly398 lines the NAD(+) pocket. Asp437 contributes to the FAD binding site. The Nuclear localization signal signature appears at 445–450; the sequence is KLGRRR. Residues 452–453, Trp482, and Glu492 each bind NAD(+); that span reads EH. FAD-binding positions include 453–454 and Trp482; that span reads HH. A compositionally biased stretch (polar residues) spans 512-528; it reads AQDNPKSATEQSGTGIR. The segment at 512–551 is disordered; that stretch reads AQDNPKSATEQSGTGIRSESETESEASEITIPPSDPAVPQ. A Phosphothreonine modification is found at Thr520. Phosphoserine is present on residues Ser523 and Ser529. Asn582 provides a ligand contact to NAD(+). N6-acetyllysine is present on Lys592.

It belongs to the FAD-dependent oxidoreductase family. Monomer (oxidized form). Homodimer (reduced form). Upon reduction with NADH, undergoes dimerization and forms tight, long-lived FADH2-NAD charge transfer complexes (CTC) resistant to oxidation. Also dimerizes with isoform 3 preventing its release from mitochondria. Interacts with XIAP/BIRC4. Interacts (via N-terminus) with EIF3G (via C-terminus). Interacts with PRELID1. Interacts with CHCHD4; the interaction increases in presence of NADH. Interacts with processed form of PARP1 (Poly [ADP-ribose] polymerase 1, processed C-terminus); interaction is mediated with poly-ADP-ribose chains attached to PARP1, promoting translocation into the nucleus. It depends on FAD as a cofactor. Post-translationally, under normal conditions, a 54-residue N-terminal segment is first proteolytically removed during or just after translocation into the mitochondrial intermembrane space (IMS) by the mitochondrial processing peptidase (MPP) to form the inner-membrane-anchored mature form (AIFmit). During apoptosis, it is further proteolytically processed at amino-acid position 101 leading to the generation of the mature form, which is confined to the mitochondrial IMS in a soluble form (AIFsol). AIFsol is released to the cytoplasm in response to specific death signals, and translocated to the nucleus, where it induces nuclear apoptosis in a caspase-independent manner. In terms of processing, ubiquitination by XIAP/BIRC4 does not lead to proteasomal degradation. Ubiquitination at Lys-254 by XIAP/BIRC4 blocks its ability to bind DNA and induce chromatin degradation, thereby inhibiting its ability to induce cell death.

It is found in the mitochondrion intermembrane space. It localises to the mitochondrion inner membrane. Its subcellular location is the cytoplasm. The protein resides in the nucleus. The protein localises to the perinuclear region. The catalysed reaction is A + NADH + H(+) = AH2 + NAD(+). In terms of biological role, functions both as NADH oxidoreductase and as regulator of apoptosis. In response to apoptotic stimuli, it is released from the mitochondrion intermembrane space into the cytosol and to the nucleus, where it functions as a proapoptotic factor in a caspase-independent pathway. Release into the cytoplasm is mediated upon binding to poly-ADP-ribose chains. The soluble form (AIFsol) found in the nucleus induces 'parthanatos' i.e. caspase-independent fragmentation of chromosomal DNA. Binds to DNA in a sequence-independent manner. Interacts with EIF3G, and thereby inhibits the EIF3 machinery and protein synthesis, and activates caspase-7 to amplify apoptosis. Plays a critical role in caspase-independent, pyknotic cell death in hydrogen peroxide-exposed cells. In contrast, participates in normal mitochondrial metabolism. Plays an important role in the regulation of respiratory chain biogenesis by interacting with CHCHD4 and controlling CHCHD4 mitochondrial import. This is Apoptosis-inducing factor 1, mitochondrial (Aifm1) from Rattus norvegicus (Rat).